The following is a 68-amino-acid chain: Large ribosomal subunit protein bL31 (68 aa).

Residues Cys-17, Cys-19, Cys-37, and Cys-40 each contribute to the Zn(2+) site.

It belongs to the bacterial ribosomal protein bL31 family. Type A subfamily. In terms of assembly, part of the 50S ribosomal subunit. Requires Zn(2+) as cofactor.

Binds the 23S rRNA. The polypeptide is Large ribosomal subunit protein bL31 (Dehalococcoides mccartyi (strain CBDB1)).